The following is a 260-amino-acid chain: Small ribosomal subunit protein bS6 (260 aa).

It belongs to the bacterial ribosomal protein bS6 family.

In terms of biological role, binds together with bS18 to 16S ribosomal RNA. The polypeptide is Small ribosomal subunit protein bS6 (Wolbachia sp. subsp. Brugia malayi (strain TRS)).